We begin with the raw amino-acid sequence, 301 residues long: Acetylglutamate kinase (301 aa).

Residues 68–69 (GG), Arg90, and Asn195 each bind substrate.

Belongs to the acetylglutamate kinase family. ArgB subfamily.

The protein resides in the cytoplasm. It carries out the reaction N-acetyl-L-glutamate + ATP = N-acetyl-L-glutamyl 5-phosphate + ADP. The protein operates within amino-acid biosynthesis; L-arginine biosynthesis; N(2)-acetyl-L-ornithine from L-glutamate: step 2/4. Its function is as follows. Catalyzes the ATP-dependent phosphorylation of N-acetyl-L-glutamate. The chain is Acetylglutamate kinase from Pseudomonas aeruginosa (strain LESB58).